Consider the following 273-residue polypeptide: 4-hydroxy-tetrahydrodipicolinate reductase (273 aa).

NAD(+) contacts are provided by residues 12 to 17 (GAGGRM) and Glu-38. NADP(+) is bound at residue Arg-39. NAD(+)-binding positions include 102-104 (GTT) and 126-129 (AANF). Catalysis depends on His-159, which acts as the Proton donor/acceptor. His-160 contributes to the (S)-2,3,4,5-tetrahydrodipicolinate binding site. Lys-163 acts as the Proton donor in catalysis. Residue 169–170 (GT) coordinates (S)-2,3,4,5-tetrahydrodipicolinate.

This sequence belongs to the DapB family. Homotetramer.

The protein localises to the cytoplasm. The enzyme catalyses (S)-2,3,4,5-tetrahydrodipicolinate + NAD(+) + H2O = (2S,4S)-4-hydroxy-2,3,4,5-tetrahydrodipicolinate + NADH + H(+). The catalysed reaction is (S)-2,3,4,5-tetrahydrodipicolinate + NADP(+) + H2O = (2S,4S)-4-hydroxy-2,3,4,5-tetrahydrodipicolinate + NADPH + H(+). Its pathway is amino-acid biosynthesis; L-lysine biosynthesis via DAP pathway; (S)-tetrahydrodipicolinate from L-aspartate: step 4/4. Catalyzes the conversion of 4-hydroxy-tetrahydrodipicolinate (HTPA) to tetrahydrodipicolinate. The sequence is that of 4-hydroxy-tetrahydrodipicolinate reductase from Salmonella schwarzengrund (strain CVM19633).